A 301-amino-acid polypeptide reads, in one-letter code: Bifunctional protein FolD (301 aa).

NADP(+) contacts are provided by residues 164 to 166 (GRS), Ser-191, and Ile-232.

The protein belongs to the tetrahydrofolate dehydrogenase/cyclohydrolase family. In terms of assembly, homodimer.

It catalyses the reaction (6R)-5,10-methylene-5,6,7,8-tetrahydrofolate + NADP(+) = (6R)-5,10-methenyltetrahydrofolate + NADPH. The enzyme catalyses (6R)-5,10-methenyltetrahydrofolate + H2O = (6R)-10-formyltetrahydrofolate + H(+). It participates in one-carbon metabolism; tetrahydrofolate interconversion. Its function is as follows. Catalyzes the oxidation of 5,10-methylenetetrahydrofolate to 5,10-methenyltetrahydrofolate and then the hydrolysis of 5,10-methenyltetrahydrofolate to 10-formyltetrahydrofolate. This Borrelia garinii subsp. bavariensis (strain ATCC BAA-2496 / DSM 23469 / PBi) (Borreliella bavariensis) protein is Bifunctional protein FolD.